Here is a 384-residue protein sequence, read N- to C-terminus: Nodal homolog 2-B (384 aa).

The N-terminal stretch at 1–18 is a signal peptide; that stretch reads MASLGAILLFAIASLMHG. Residues 19–283 constitute a propeptide that is removed on maturation; that stretch reads RPIHSDRKGA…RVADARRHRR (265 aa). N-linked (GlcNAc...) asparagine glycosylation is found at asparagine 71, asparagine 173, and asparagine 344. An intrachain disulfide couples cysteine 306 to cysteine 372.

It belongs to the TGF-beta family. In terms of assembly, homodimer; disulfide-linked. Forms heterodimers with the TGF-beta family member derriere. Interacts with tsku; enhances nodal2 activity.

It is found in the secreted. In terms of biological role, cooperation and regulatory loops of multiple nodals are essential for mesendoderm patterning in early embryos. Essential for mesoderm formation and axial patterning during embryonic development. Activates the activin-like signaling pathway to induce dorsal and ventral mesoderm in animal cap ectoderm. In addition, also dorsalizes ventral marginal zone (VMZ) tissues during gastrulation. Induces muscle actin. Appears to act as both a short-range and long-range morphogen. The unprocessed protein inhibits bmp- and wnt-signaling. The sequence is that of Nodal homolog 2-B (nodal2-b) from Xenopus laevis (African clawed frog).